A 1622-amino-acid polypeptide reads, in one-letter code: Transient receptor potential cation channel subfamily M member 1 (1622 aa).

5 disordered regions span residues 1–25 (MGSM…GSQK), 64–95 (PPLP…KHTQ), 450–490 (LAPP…EVEE), 618–641 (LGME…EEEI), and 822–856 (SKEN…HKKQ). Residues 1-875 (MGSMRKMSSS…CEFYNAPIVK (875 aa)) lie on the Cytoplasmic side of the membrane. The span at 8–25 (SSSFKRGSIKSSTSGSQK) shows a compositional bias: low complexity. The span at 70–95 (APSTTGEDTKQADTQSGKWSVSKHTQ) shows a compositional bias: polar residues. A compositionally biased stretch (basic residues) spans 472–483 (GRGKGKGKKKGK). Composition is skewed to basic and acidic residues over residues 823–832 (KENEDGKEKE) and 843–853 (GSRKGDEENEH). Residues 876–896 (FWFYTISYLGYLLLFNYVILV) form a helical membrane-spanning segment. Residues 897–942 (RMDGWPSPQEWIVISYIVSLALEKIREILMSEPGKLSQKIKVWLQE) are Extracellular-facing. A helical membrane pass occupies residues 943–963 (YWNITDLVAISMFMVGAILRL). Topologically, residues 964–973 (QSQPYMGYGR) are cytoplasmic. Residues 974–994 (VIYCVDIILWYIRVLDIFGVN) traverse the membrane as a helical segment. At 995-1006 (KYLGPYVMMIGK) the chain is on the extracellular side. A helical transmembrane segment spans residues 1007 to 1027 (MMIDMLYFVVIMLVVLMSFGV). The Cytoplasmic segment spans residues 1028 to 1099 (ARQAILHPEE…CIPGAWLTPA (72 aa)). A helical membrane pass occupies residues 1100 to 1120 (LMACYLLVANILLVNLLIAVF). A glycan (N-linked (GlcNAc...) asparagine) is linked at asparagine 1121. Residues 1121–1150 (NNTFFEVKSISNQVWKFQRYQLIMTFHDRP) lie on the Extracellular side of the membrane. A helical membrane pass occupies residues 1151 to 1171 (VLPPPMIILSHIYIIIMRLSG). Residues 1172 to 1622 (RCRKKREGDQ…QEKRSAETEC (451 aa)) lie on the Cytoplasmic side of the membrane. A coiled-coil region spans residues 1224–1252 (DERIRVTSERVENMSMRLEEINERENFMK). 3 disordered regions span residues 1354 to 1383 (EDAK…RSRL), 1389 to 1408 (LSTE…EFDP), and 1567 to 1622 (CLRS…ETEC). The segment covering 1613 to 1622 (QEKRSAETEC) has biased composition (basic and acidic residues).

It belongs to the transient receptor (TC 1.A.4) family. LTrpC subfamily. TRPM1 sub-subfamily. In terms of assembly, homodimer. Interacts with TRPM3; the interaction results in the formation of a heteromultimeric cation channel complex that are functionally different from the homomeric channels. Interacts with GPR179. Associates with both guanine nucleotide-binding proteins G(o) and beta-gamma G protein dimer; implicated in directly regulating TRPM1 channel open-state. As to expression, expressed in the retina where it localizes on dendritic tips of ON bipolar cells. Specifically, it is expressed in retinal bipolar cells (BPCs) of the ON subtype. Not detected in brain, lung, liver, heart, kidney, spleen or small intestine. Also expressed at high levels in poorly metastatic variants of B16 melanoma and at much reduced levels in highly metastatic variants of B16 melanoma.

The protein localises to the cell membrane. It localises to the endoplasmic reticulum membrane. Its subcellular location is the cell projection. The protein resides in the axon. It carries out the reaction Ca(2+)(in) = Ca(2+)(out). The enzyme catalyses Mg(2+)(in) = Mg(2+)(out). The catalysed reaction is Mn(2+)(in) = Mn(2+)(out). It catalyses the reaction Ni(2+)(in) = Ni(2+)(out). With respect to regulation, inhibited by extracellular zinc ions. Inhibited by intracellular Mg(2+). Activated by the neuroactive steroid pregnenolone sulfate. Negatively regulated by activation of GRM6 receptors in the ON-bipolar cells. Functionally, constitutively open nonselective divalent cation-conducting channels which mediate the influx of Ca(2+), Mg(2+), Mn(2+), Ba(2+), and Ni(2+) into the cytoplasm, leading to membrane depolarization. Impermeable to zinc ions. In addition, forms heteromultimeric ion channels with TRPM3 which are permeable for calcium and zinc ions. Plays an essential role for the depolarizing photoresponse of retinal ON bipolar cells. In the dark, tonic release of glutamate activates the G-protein coupled receptor for glutamate (GRM6), its activation induces the release of G(o) and the beta-gamma G protein dimer. Both subunits can interact and inactivate the TRPM1 channel. A light onset, induces decrease in glutamate release and deactivation of GRM6 leading to channel opening and membrane depolarization. May play a role in metastasis suppression. This chain is Transient receptor potential cation channel subfamily M member 1, found in Mus musculus (Mouse).